A 780-amino-acid polypeptide reads, in one-letter code: Semaphorin-3G (780 aa).

An N-terminal signal peptide occupies residues Met-1–Pro-22. Residues Arg-32–Leu-519 form the Sema domain. N-linked (GlcNAc...) asparagine glycosylation occurs at Asn-44. The cysteines at positions 105 and 116 are disulfide-linked. A glycan (N-linked (GlcNAc...) asparagine) is linked at Asn-127. Disulfide bonds link Cys-134/Cys-143, Cys-270/Cys-382, Cys-294/Cys-342, Cys-522/Cys-540, and Cys-603/Cys-655. The Ig-like C2-type domain maps to Pro-569–Leu-671. An N-linked (GlcNAc...) asparagine glycan is attached at Asn-652.

This sequence belongs to the semaphorin family. Highly expressed in lung and kidney. Weakly expressed in brain.

Its subcellular location is the secreted. In terms of biological role, has chemorepulsive activities for sympathetic axons. Ligand of NRP2. The chain is Semaphorin-3G (Sema3g) from Mus musculus (Mouse).